A 421-amino-acid chain; its full sequence is Zinc finger protein 584 (421 aa).

In terms of domain architecture, KRAB spans 17–88 (VMFEDVTVYF…SWVDVTPVSR (72 aa)). The span at 120 to 129 (QHQDTHSEGK) shows a compositional bias: basic and acidic residues. Residues 120–146 (QHQDTHSEGKPRRHTEHGAAFPPGSSC) are disordered. 8 consecutive C2H2-type zinc fingers follow at residues 159–181 (FKCS…LITH), 214–236 (HVCN…QKVH), 242–264 (FKCS…QRIH), 270–292 (YECS…RKVH), 298–320 (YECT…QRVH), 326–348 (FECK…WKVH), 354–376 (YECS…QQFH), and 382–404 (YECT…KKVH). Positions 402–421 (KVHTPERRQEDRAHGKVVSC) are disordered. Residues 404–415 (HTPERRQEDRAH) show a composition bias toward basic and acidic residues.

Belongs to the krueppel C2H2-type zinc-finger protein family.

It localises to the nucleus. May be involved in transcriptional regulation. The polypeptide is Zinc finger protein 584 (ZNF584) (Homo sapiens (Human)).